Consider the following 423-residue polypeptide: Serine--tRNA ligase (423 aa).

231 to 233 (TAE) is an L-serine binding site. An ATP-binding site is contributed by 262–264 (RSE). Glu285 is a binding site for L-serine. Residue 349-352 (EISS) coordinates ATP. Ser384 provides a ligand contact to L-serine.

It belongs to the class-II aminoacyl-tRNA synthetase family. Type-1 seryl-tRNA synthetase subfamily. Homodimer. The tRNA molecule binds across the dimer.

It localises to the cytoplasm. It catalyses the reaction tRNA(Ser) + L-serine + ATP = L-seryl-tRNA(Ser) + AMP + diphosphate + H(+). The catalysed reaction is tRNA(Sec) + L-serine + ATP = L-seryl-tRNA(Sec) + AMP + diphosphate + H(+). Its pathway is aminoacyl-tRNA biosynthesis; selenocysteinyl-tRNA(Sec) biosynthesis; L-seryl-tRNA(Sec) from L-serine and tRNA(Sec): step 1/1. Its function is as follows. Catalyzes the attachment of serine to tRNA(Ser). Is also able to aminoacylate tRNA(Sec) with serine, to form the misacylated tRNA L-seryl-tRNA(Sec), which will be further converted into selenocysteinyl-tRNA(Sec). The polypeptide is Serine--tRNA ligase (Acinetobacter baumannii (strain AB307-0294)).